Reading from the N-terminus, the 132-residue chain is Small ribosomal subunit protein uS8 (132 aa).

Belongs to the universal ribosomal protein uS8 family. In terms of assembly, part of the 30S ribosomal subunit. Contacts proteins S5 and S12.

Its function is as follows. One of the primary rRNA binding proteins, it binds directly to 16S rRNA central domain where it helps coordinate assembly of the platform of the 30S subunit. The protein is Small ribosomal subunit protein uS8 of Ehrlichia ruminantium (strain Welgevonden).